A 160-amino-acid polypeptide reads, in one-letter code: Eukaryotic translation initiation factor 5A-3 (160 aa).

Basic and acidic residues predominate over residues 1–12 (MSDEEHHFESKA). Positions 1 to 21 (MSDEEHHFESKADAGASKTYP) are disordered. Position 52 is a hypusine (Lys52).

This sequence belongs to the eIF-5A family. In terms of processing, lys-52 undergoes hypusination, a unique post-translational modification that consists in the addition of a butylamino group from spermidine to lysine side chain, leading to the formation of the unusual amino acid hypusine. eIF-5As are the only known proteins to undergo this modification, which is essential for their function.

In terms of biological role, translation factor that promotes translation elongation and termination, particularly upon ribosome stalling at specific amino acid sequence contexts. Binds between the exit (E) and peptidyl (P) site of the ribosome and promotes rescue of stalled ribosome: specifically required for efficient translation of polyproline-containing peptides as well as other motifs that stall the ribosome. Acts as a ribosome quality control (RQC) cofactor by joining the RQC complex to facilitate peptidyl transfer during CAT tailing step. The chain is Eukaryotic translation initiation factor 5A-3 (EIF5A3) from Solanum tuberosum (Potato).